Consider the following 532-residue polypeptide: Aspartate--tRNA ligase 1, cytoplasmic (532 aa).

Residues 7-41 (LEECGEKISKKESKKRAAKLEKLLRKQEREEATSS) adopt a coiled-coil conformation. Residues 31 to 58 (RKQEREEATSSSLSLEEEDESCSSNYGD) are disordered. The segment at residues 88–169 (VSIRGRLHKN…QVEIHVRKMY (82 aa)) is a DNA-binding region (OB). E260 is an L-aspartate binding site. The aspartate stretch occupies residues 282–285 (QLHK). R304 is an L-aspartate binding site. ATP-binding positions include 304–306 (RAE), 312–314 (RHL), and E455. Residues E455 and S458 each contribute to the Mg(2+) site. L-aspartate-binding residues include S458 and R462. ATP is bound at residue 503-506 (GLER).

This sequence belongs to the class-II aminoacyl-tRNA synthetase family. Type 2 subfamily.

It localises to the cytoplasm. The protein resides in the cytosol. It carries out the reaction tRNA(Asp) + L-aspartate + ATP = L-aspartyl-tRNA(Asp) + AMP + diphosphate. Catalyzes the specific attachment of an amino acid to its cognate tRNA in a 2 step reaction: the amino acid (AA) is first activated by ATP to form AA-AMP and then transferred to the acceptor end of the tRNA. This Arabidopsis thaliana (Mouse-ear cress) protein is Aspartate--tRNA ligase 1, cytoplasmic.